Here is a 209-residue protein sequence, read N- to C-terminus: Uracil phosphoribosyltransferase (209 aa).

5-phospho-alpha-D-ribose 1-diphosphate-binding positions include R79, R104, and 131-139; that span reads DPMLATGNS. Uracil-binding positions include I194 and 199–201; that span reads GDA. 5-phospho-alpha-D-ribose 1-diphosphate is bound at residue D200.

The protein belongs to the UPRTase family. Mg(2+) serves as cofactor.

It carries out the reaction UMP + diphosphate = 5-phospho-alpha-D-ribose 1-diphosphate + uracil. Its pathway is pyrimidine metabolism; UMP biosynthesis via salvage pathway; UMP from uracil: step 1/1. With respect to regulation, allosterically activated by GTP. Functionally, catalyzes the conversion of uracil and 5-phospho-alpha-D-ribose 1-diphosphate (PRPP) to UMP and diphosphate. The sequence is that of Uracil phosphoribosyltransferase from Rhodococcus jostii (strain RHA1).